The primary structure comprises 469 residues: Trigger factor (469 aa).

One can recognise a PPIase FKBP-type domain in the interval 166–245 (GDFLTIDITA…VKSVKERELP (80 aa)). A disordered region spans residues 430–469 (GGEEEAAEAEAAPAVDSDAVEGEAATEEAAPSDDPAAVKF).

Belongs to the FKBP-type PPIase family. Tig subfamily.

The protein resides in the cytoplasm. It catalyses the reaction [protein]-peptidylproline (omega=180) = [protein]-peptidylproline (omega=0). Functionally, involved in protein export. Acts as a chaperone by maintaining the newly synthesized protein in an open conformation. Functions as a peptidyl-prolyl cis-trans isomerase. The chain is Trigger factor from Arthrobacter sp. (strain FB24).